Here is a 472-residue protein sequence, read N- to C-terminus: Divalent metal cation transporter MntH (472 aa).

The next 11 helical transmembrane spans lie at 59–79 (LLAFLGPGYMVSVGYMDPGNW), 92–112 (MLLSVILLSNVMAIVLQALAA), 144–164 (LAIIACDLAEVIGTAIALNLL), 167–187 (VPIILGAVITAVDVVLVLLLM), 196–216 (AFVIALLLVIFGCFVVQIVLA), 233–253 (VVADPQALYLAIGIVGATVMP), 288–308 (LALMLALFINASILILAAAVF), 325–345 (LLAPVLGVGVAATLFATALLA), 377–397 (VLTRGLAIVPVIVVVALYGEQ), 402–422 (LLLLSQVILSMQLPFAVIPLL), and 439–459 (WLMVVAWLIAGVIVVLNVKLL).

Belongs to the NRAMP family.

Its subcellular location is the cell inner membrane. H(+)-stimulated, divalent metal cation uptake system. This chain is Divalent metal cation transporter MntH, found in Xylella fastidiosa (strain Temecula1 / ATCC 700964).